We begin with the raw amino-acid sequence, 127 residues long: Glycine cleavage system H protein (127 aa).

The 83-residue stretch at 24-106 folds into the Lipoyl-binding domain; the sequence is TVTVGITDHA…FEGAWIAKIK (83 aa). Lys65 carries the N6-lipoyllysine modification.

It belongs to the GcvH family. The glycine cleavage system is composed of four proteins: P, T, L and H. Requires (R)-lipoate as cofactor.

In terms of biological role, the glycine cleavage system catalyzes the degradation of glycine. The H protein shuttles the methylamine group of glycine from the P protein to the T protein. The polypeptide is Glycine cleavage system H protein (Marinomonas sp. (strain MWYL1)).